Reading from the N-terminus, the 554-residue chain is (Z)-gamma-bisabolene synthase 1 (554 aa).

Mg(2+) is bound by residues Asp-306, Asp-310, Asp-450, and Asp-458. The DDXXD motif motif lies at 306-310 (DDACD).

It belongs to the terpene synthase family. Tpsa subfamily. Mg(2+) is required as a cofactor. It depends on Mn(2+) as a cofactor. Predominantly expressed in roots. Expressed in the cortex and the sub-epidermal layers of roots. Also detected in leaf hydathodes and flower stigmata.

It localises to the cytoplasm. The enzyme catalyses (2E,6E)-farnesyl diphosphate = (Z)-gamma-bisabolene + diphosphate. Its pathway is secondary metabolite biosynthesis; terpenoid biosynthesis. Functionally, involved in sesquiterpene (C15) biosynthesis. The major product is (Z)-gamma-bisabolene with minor amounts of (E)-nerolidol and alpha-bisabolol. In Arabidopsis thaliana (Mouse-ear cress), this protein is (Z)-gamma-bisabolene synthase 1 (TPS12).